The chain runs to 210 residues: NDR1/HIN1-like protein 12 (210 aa).

A helical transmembrane segment spans residues 23-43 (GVIIGFIIIVLITIFLVWIIL). N-linked (GlcNAc...) asparagine glycosylation is present at N61.

May form oligomers or be a component of larger protein complex in plasma membranes. As to expression, expressed in leaves, stems and flowers, and, to a lower extent, in siliques and roots.

The protein localises to the cell membrane. Functionally, may play a role in plant immunity. This Arabidopsis thaliana (Mouse-ear cress) protein is NDR1/HIN1-like protein 12.